The following is a 175-amino-acid chain: Large ribosomal subunit protein uL10 (175 aa).

This sequence belongs to the universal ribosomal protein uL10 family. Part of the ribosomal stalk of the 50S ribosomal subunit. The N-terminus interacts with L11 and the large rRNA to form the base of the stalk. The C-terminus forms an elongated spine to which L12 dimers bind in a sequential fashion forming a multimeric L10(L12)X complex.

Functionally, forms part of the ribosomal stalk, playing a central role in the interaction of the ribosome with GTP-bound translation factors. The protein is Large ribosomal subunit protein uL10 of Psychrobacter arcticus (strain DSM 17307 / VKM B-2377 / 273-4).